The following is a 953-amino-acid chain: Anion exchange protein 4 (953 aa).

The interval 20–41 is disordered; the sequence is SEQLDGDLGPGSGLDGPSDIDN. The next 4 helical transmembrane spans lie at 385–405, 413–433, 470–490, and 501–521; these read AVLYIYLATVTNAITFGGLLG, GVLESFLGTAVAGATFCLMAG, VGIWVATFCLALVATEASLLV, and FCALISLIFIYDAVGKMLNLI. The membrane (anion exchange) stretch occupies residues 385 to 953; it reads AVLYIYLATV…KAPEINISVN (569 aa). Residues N546 and N570 are each glycosylated (N-linked (GlcNAc...) asparagine). Transmembrane regions (helical) follow at residues 594 to 614, 635 to 655, 682 to 702, 728 to 748, 785 to 805, 807 to 827, and 869 to 889; these read VPDIAFFSLLLFFTSFLCAIA, FSSVLAILLGCGLDAFLGLAT, PWWLSVAAALPALLLSILIFM, LFCVAVLMLFTSALGLPWYVS, GLVVFILTGVSIFLAPVLKFI, MPVLYGIFLYMGVAALSSMQF, and LWVIKSTPAAIVFPLMLLGLV. Basic and acidic residues predominate over residues 916–927; the sequence is KTIPENRPEPEH. The segment at 916 to 938 is disordered; the sequence is KTIPENRPEPEHLFSGNDSENSE. 2 N-linked (GlcNAc...) asparagine glycosylation sites follow: N932 and N949.

The protein belongs to the anion exchanger (TC 2.A.31) family. In terms of tissue distribution, expressed in kidney and gastrointestinal tract. In kidney, it is highly expressed in the cortex, expressed at intermediate level in the outer medulla and not expressed in the inner medulla. It is expressed in the cecum, while it is absent in other segments of gastrointestinal tract. Highly expressed in the cortical collecting duct (CCD). Expressed in both alpha-intercalated cells and beta-intercalated cells in the CCD (at protein level).

It is found in the basolateral cell membrane. It carries out the reaction 2 hydrogencarbonate(out) + chloride(in) + Na(+)(out) = 2 hydrogencarbonate(in) + chloride(out) + Na(+)(in). The enzyme catalyses K(+)(in) + 2 hydrogencarbonate(in) + chloride(out) = K(+)(out) + 2 hydrogencarbonate(out) + chloride(in). The catalysed reaction is Li(+)(in) + 2 hydrogencarbonate(in) + chloride(out) = Li(+)(out) + 2 hydrogencarbonate(out) + chloride(in). It catalyses the reaction Rb(+)(in) + 2 hydrogencarbonate(in) + chloride(out) = Rb(+)(out) + 2 hydrogencarbonate(out) + chloride(in). It carries out the reaction Cs(+)(in) + 2 hydrogencarbonate(in) + chloride(out) = Cs(+)(out) + 2 hydrogencarbonate(out) + chloride(in). 4,4'-diisothiocyanatodihydrostilbene-2,2'- disulfonic acid (H2DIDS) potently inhibits chloride/hydrogencarbonate antiporter activity with 50% inhibition at about 5 uM. Completely inhibits chloride/hydrogencarbonate antiporter activity at 200 uM of 4,4'-diisothiocyano-trans-stilbene-2,2'-disulfonic acid (DIDS). In terms of biological role, electroneutral Cl(-)/HCO3(-) antiporter that favors chloride ion entry and efflux of hydrogencarbonate and sodium ion across the basolateral membrane and may participate in salivary secretion. Also mediates Cl(-)/HCO3(-) exchange activity in the presence of K(+) as well as Cs(+), Li(+), and Rb(+). Does not contribute to Cl(-)/HCO3(-) exchanger in the apical membrane of the upper villous epithelium. The chain is Anion exchange protein 4 from Rattus norvegicus (Rat).